Reading from the N-terminus, the 323-residue chain is Lipoyl synthase (323 aa).

Cysteine 69, cysteine 74, cysteine 80, cysteine 95, cysteine 99, cysteine 102, and serine 310 together coordinate [4Fe-4S] cluster. Positions 81-299 constitute a Radical SAM core domain; sequence WTHGTLTVMI…EAWGYELGFR (219 aa).

Belongs to the radical SAM superfamily. Lipoyl synthase family. The cofactor is [4Fe-4S] cluster.

Its subcellular location is the cytoplasm. The catalysed reaction is [[Fe-S] cluster scaffold protein carrying a second [4Fe-4S](2+) cluster] + N(6)-octanoyl-L-lysyl-[protein] + 2 oxidized [2Fe-2S]-[ferredoxin] + 2 S-adenosyl-L-methionine + 4 H(+) = [[Fe-S] cluster scaffold protein] + N(6)-[(R)-dihydrolipoyl]-L-lysyl-[protein] + 4 Fe(3+) + 2 hydrogen sulfide + 2 5'-deoxyadenosine + 2 L-methionine + 2 reduced [2Fe-2S]-[ferredoxin]. The protein operates within protein modification; protein lipoylation via endogenous pathway; protein N(6)-(lipoyl)lysine from octanoyl-[acyl-carrier-protein]: step 2/2. In terms of biological role, catalyzes the radical-mediated insertion of two sulfur atoms into the C-6 and C-8 positions of the octanoyl moiety bound to the lipoyl domains of lipoate-dependent enzymes, thereby converting the octanoylated domains into lipoylated derivatives. In Thermus thermophilus (strain ATCC 27634 / DSM 579 / HB8), this protein is Lipoyl synthase.